We begin with the raw amino-acid sequence, 424 residues long: Glutamyl-tRNA reductase (424 aa).

Substrate contacts are provided by residues 49 to 52 (TCNR), serine 109, 114 to 116 (EDQ), and glutamine 120. Residue cysteine 50 is the Nucleophile of the active site. Position 189–194 (189–194 (GFGKMS)) interacts with NADP(+).

Belongs to the glutamyl-tRNA reductase family. Homodimer.

It carries out the reaction (S)-4-amino-5-oxopentanoate + tRNA(Glu) + NADP(+) = L-glutamyl-tRNA(Glu) + NADPH + H(+). The protein operates within porphyrin-containing compound metabolism; protoporphyrin-IX biosynthesis; 5-aminolevulinate from L-glutamyl-tRNA(Glu): step 1/2. Functionally, catalyzes the NADPH-dependent reduction of glutamyl-tRNA(Glu) to glutamate 1-semialdehyde (GSA). This is Glutamyl-tRNA reductase from Alkaliphilus metalliredigens (strain QYMF).